Reading from the N-terminus, the 142-residue chain is Large ribosomal subunit protein uL13 (142 aa).

Belongs to the universal ribosomal protein uL13 family. In terms of assembly, part of the 50S ribosomal subunit.

In terms of biological role, this protein is one of the early assembly proteins of the 50S ribosomal subunit, although it is not seen to bind rRNA by itself. It is important during the early stages of 50S assembly. The protein is Large ribosomal subunit protein uL13 of Alteromonas mediterranea (strain DSM 17117 / CIP 110805 / LMG 28347 / Deep ecotype).